Reading from the N-terminus, the 95-residue chain is Protein TusB (95 aa).

Belongs to the DsrH/TusB family. Heterohexamer, formed by a dimer of trimers. The hexameric TusBCD complex contains 2 copies each of TusB, TusC and TusD. The TusBCD complex interacts with TusE.

It localises to the cytoplasm. Functionally, part of a sulfur-relay system required for 2-thiolation of 5-methylaminomethyl-2-thiouridine (mnm(5)s(2)U) at tRNA wobble positions. This is Protein TusB from Escherichia coli O45:K1 (strain S88 / ExPEC).